We begin with the raw amino-acid sequence, 285 residues long: Polyamine aminopropyltransferase (285 aa).

One can recognise a PABS domain in the interval 5–241 (DNWYIEHFQP…GWWSVTMASK (237 aa)). An S-methyl-5'-thioadenosine-binding site is contributed by Q35. H66 and D90 together coordinate spermidine. Residues D110 and 141 to 142 (DG) each bind S-methyl-5'-thioadenosine. D160 functions as the Proton acceptor in the catalytic mechanism. 160-163 (DSTD) is a binding site for spermidine. P167 lines the S-methyl-5'-thioadenosine pocket.

The protein belongs to the spermidine/spermine synthase family. As to quaternary structure, homodimer or homotetramer.

It localises to the cytoplasm. The catalysed reaction is S-adenosyl 3-(methylsulfanyl)propylamine + putrescine = S-methyl-5'-thioadenosine + spermidine + H(+). The protein operates within amine and polyamine biosynthesis; spermidine biosynthesis; spermidine from putrescine: step 1/1. Its function is as follows. Catalyzes the irreversible transfer of a propylamine group from the amino donor S-adenosylmethioninamine (decarboxy-AdoMet) to putrescine (1,4-diaminobutane) to yield spermidine. This chain is Polyamine aminopropyltransferase, found in Xanthomonas oryzae pv. oryzae (strain MAFF 311018).